The following is an 82-amino-acid chain: Small ribosomal subunit protein uS17 (82 aa).

The protein belongs to the universal ribosomal protein uS17 family. As to quaternary structure, part of the 30S ribosomal subunit.

Functionally, one of the primary rRNA binding proteins, it binds specifically to the 5'-end of 16S ribosomal RNA. This chain is Small ribosomal subunit protein uS17, found in Shewanella woodyi (strain ATCC 51908 / MS32).